The following is a 154-amino-acid chain: 17.7 kDa class I heat shock protein (154 aa).

The sHSP domain maps to 40-154 (ETSAFANTRI…PDVKSIEISG (115 aa)).

It belongs to the small heat shock protein (HSP20) family. In terms of assembly, forms oligomeric structures.

It localises to the cytoplasm. This is 17.7 kDa class I heat shock protein from Solanum peruvianum (Peruvian tomato).